Consider the following 244-residue polypeptide: Ribosomal RNA large subunit methyltransferase E (244 aa).

S-adenosyl-L-methionine is bound by residues Gly-81, Trp-83, Asp-109, Asp-125, and Asp-149. Lys-189 serves as the catalytic Proton acceptor.

It belongs to the class I-like SAM-binding methyltransferase superfamily. RNA methyltransferase RlmE family.

The protein resides in the cytoplasm. The catalysed reaction is uridine(2552) in 23S rRNA + S-adenosyl-L-methionine = 2'-O-methyluridine(2552) in 23S rRNA + S-adenosyl-L-homocysteine + H(+). Specifically methylates the uridine in position 2552 of 23S rRNA at the 2'-O position of the ribose in the fully assembled 50S ribosomal subunit. This Cereibacter sphaeroides (strain ATCC 17023 / DSM 158 / JCM 6121 / CCUG 31486 / LMG 2827 / NBRC 12203 / NCIMB 8253 / ATH 2.4.1.) (Rhodobacter sphaeroides) protein is Ribosomal RNA large subunit methyltransferase E.